Reading from the N-terminus, the 340-residue chain is Ketol-acid reductoisomerase (NADP(+)) (340 aa).

Residues M1–T182 enclose the KARI N-terminal Rossmann domain. NADP(+) contacts are provided by residues Y24–Q27, R48, S51, S53, and D83–Q86. The active site involves H108. Residue G134 coordinates NADP(+). The KARI C-terminal knotted domain maps to N183–I329. Mg(2+) contacts are provided by D191, E195, E227, and E231. S252 is a substrate binding site.

The protein belongs to the ketol-acid reductoisomerase family. The cofactor is Mg(2+).

It carries out the reaction (2R)-2,3-dihydroxy-3-methylbutanoate + NADP(+) = (2S)-2-acetolactate + NADPH + H(+). It catalyses the reaction (2R,3R)-2,3-dihydroxy-3-methylpentanoate + NADP(+) = (S)-2-ethyl-2-hydroxy-3-oxobutanoate + NADPH + H(+). It functions in the pathway amino-acid biosynthesis; L-isoleucine biosynthesis; L-isoleucine from 2-oxobutanoate: step 2/4. The protein operates within amino-acid biosynthesis; L-valine biosynthesis; L-valine from pyruvate: step 2/4. Functionally, involved in the biosynthesis of branched-chain amino acids (BCAA). Catalyzes an alkyl-migration followed by a ketol-acid reduction of (S)-2-acetolactate (S2AL) to yield (R)-2,3-dihydroxy-isovalerate. In the isomerase reaction, S2AL is rearranged via a Mg-dependent methyl migration to produce 3-hydroxy-3-methyl-2-ketobutyrate (HMKB). In the reductase reaction, this 2-ketoacid undergoes a metal-dependent reduction by NADPH to yield (R)-2,3-dihydroxy-isovalerate. The protein is Ketol-acid reductoisomerase (NADP(+)) of Dinoroseobacter shibae (strain DSM 16493 / NCIMB 14021 / DFL 12).